Reading from the N-terminus, the 341-residue chain is MIDDRKNKVLQAIIEDYVATAEPVGSRTIARKYNLGVSPATIRNEMSDLEELGYLEQPHTSAGRIPSNLGYRYYVDCLMPERPINPAEQELIRSTFQRKIRELDTLVRETARLLSETTHLTAVISGPQFEKAVFKEIRIVPLGNDRALLIYITDSGLVENQVVEVPLQVTMLELQQVAELLSEHLRGRRVETLSRTALQSLHRELSRYGTLLEQALHFLEQKLEPGDRHRLYFGGTSHMLDQPEFRDVQKLRGVLSFLEQEEAVAAVLGLDRLTEGVEIQIGEEIRLRELADCSVVTATYRVGDRIIGKMGVIGPRRMEYPKVVSILNAIASHLSEMNRLF.

It belongs to the HrcA family.

Functionally, negative regulator of class I heat shock genes (grpE-dnaK-dnaJ and groELS operons). Prevents heat-shock induction of these operons. This chain is Heat-inducible transcription repressor HrcA, found in Symbiobacterium thermophilum (strain DSM 24528 / JCM 14929 / IAM 14863 / T).